Reading from the N-terminus, the 210-residue chain is WASH complex subunit 3 (210 aa).

Residues 49 to 73 (EEKLASISLRIQQIETTLSILEAKL) are a coiled coil. A disordered region spans residues 173-210 (LDPNLLDTPDAPVPDAVKKNTLDQDDDSDDGSESSFSD). Over residues 195-204 (DQDDDSDDGS) the composition is skewed to acidic residues.

This sequence belongs to the CCDC53 family. In terms of assembly, component of the WASH complex.

The chain is WASH complex subunit 3 from Salmo salar (Atlantic salmon).